We begin with the raw amino-acid sequence, 175 residues long: ATP synthase subunit b (175 aa).

Residues 22 to 44 (MLVQLFFFLILLALLKKFAWGPL) form a helical membrane-spanning segment.

The protein belongs to the ATPase B chain family. F-type ATPases have 2 components, F(1) - the catalytic core - and F(0) - the membrane proton channel. F(1) has five subunits: alpha(3), beta(3), gamma(1), delta(1), epsilon(1). F(0) has three main subunits: a(1), b(2) and c(10-14). The alpha and beta chains form an alternating ring which encloses part of the gamma chain. F(1) is attached to F(0) by a central stalk formed by the gamma and epsilon chains, while a peripheral stalk is formed by the delta and b chains.

The protein resides in the cell membrane. Its function is as follows. F(1)F(0) ATP synthase produces ATP from ADP in the presence of a proton or sodium gradient. F-type ATPases consist of two structural domains, F(1) containing the extramembraneous catalytic core and F(0) containing the membrane proton channel, linked together by a central stalk and a peripheral stalk. During catalysis, ATP synthesis in the catalytic domain of F(1) is coupled via a rotary mechanism of the central stalk subunits to proton translocation. Functionally, component of the F(0) channel, it forms part of the peripheral stalk, linking F(1) to F(0). In Oceanobacillus iheyensis (strain DSM 14371 / CIP 107618 / JCM 11309 / KCTC 3954 / HTE831), this protein is ATP synthase subunit b.